Reading from the N-terminus, the 442-residue chain is DNA N(6)-methyladenine demethylase ALKBH1D (442 aa).

Residues 135 to 144 are compositionally biased toward polar residues; that stretch reads SMVHFDSTNP. The interval 135 to 185 is disordered; that stretch reads SMVHFDSTNPSSSSKSSQSQNLKIRKVRNHRNSGFKSRDQSPQRIKDPPPF. Positions 145–154 are enriched in low complexity; the sequence is SSSSKSSQSQ. A compositionally biased stretch (basic residues) spans 157 to 167; it reads KIRKVRNHRNS. A compositionally biased stretch (basic and acidic residues) spans 170 to 183; sequence KSRDQSPQRIKDPP. The Fe2OG dioxygenase domain maps to 332 to 442; the sequence is SPDICIVNFY…GRLNLTFRHF (111 aa). 2-oxoglutarate is bound at residue 339 to 341; that stretch reads NFY. Fe cation contacts are provided by His350, Asp352, and His410. 434-440 serves as a coordination point for 2-oxoglutarate; the sequence is RLNLTFR.

It belongs to the alkB family. The cofactor is Fe(2+). As to expression, expressed at low levels in roots, seedlings and rosette leaves, but barely in cauline leaves, stems, siliques and flowers.

It is found in the nucleus. It localises to the cytoplasm. The enzyme catalyses an N(6)-methyl-2'-deoxyadenosine in DNA + 2-oxoglutarate + O2 = a 2'-deoxyadenosine in DNA + formaldehyde + succinate + CO2. In terms of biological role, dioxygenase that catalyzes DNA N(6)-methyladenine (6 mA) demethylation to modulate gene expression and regulate seed germination. The polypeptide is DNA N(6)-methyladenine demethylase ALKBH1D (Arabidopsis thaliana (Mouse-ear cress)).